The chain runs to 877 residues: Mediator of RNA polymerase II transcription subunit 16 (877 aa).

WD repeat units lie at residues 21 to 71 (WEKW…EHPW), 72 to 119 (DLHS…NSWE), 120 to 165 (SSVG…VKFS), 166 to 203 (PSLTLFGGKPMEGWIAVTVSGLVTVSLLKPSGQVLTST), 204 to 257 (ESLC…RIDT), 258 to 334 (EILP…DKQP), 335 to 415 (TILK…RPVD), 416 to 460 (EPAM…LSPS), and 461 to 495 (MGHPLEVGLALRHLLFLLEYCMVTGYDWWDILLHV). Residues 848-877 (PAFVQLGPQSTHHSPRTPRSLDHLHPEDRP) form a disordered region. The segment covering 866–877 (RSLDHLHPEDRP) has biased composition (basic and acidic residues).

This sequence belongs to the Mediator complex subunit 16 family. As to quaternary structure, component of the Mediator complex, which is composed of MED1, MED4, MED6, MED7, MED8, MED9, MED10, MED11, MED12, MED13, MED13L, MED14, MED15, MED16, MED17, MED18, MED19, MED20, MED21, MED22, MED23, MED24, MED25, MED26, MED27, MED29, MED30, MED31, CCNC, CDK8 and CDC2L6/CDK11. The MED12, MED13, CCNC and CDK8 subunits form a distinct module termed the CDK8 module. Mediator containing the CDK8 module is less active than Mediator lacking this module in supporting transcriptional activation. Individual preparations of the Mediator complex lacking one or more distinct subunits have been variously termed ARC, CRSP, DRIP, PC2, SMCC and TRAP.

Its subcellular location is the nucleus. Its function is as follows. Component of the Mediator complex, a coactivator involved in the regulated transcription of nearly all RNA polymerase II-dependent genes. Mediator functions as a bridge to convey information from gene-specific regulatory proteins to the basal RNA polymerase II transcription machinery. Mediator is recruited to promoters by direct interactions with regulatory proteins and serves as a scaffold for the assembly of a functional preinitiation complex with RNA polymerase II and the general transcription factors. This Homo sapiens (Human) protein is Mediator of RNA polymerase II transcription subunit 16 (MED16).